The sequence spans 420 residues: Serine palmitoyltransferase (420 aa).

Residues 134–135 (GY), His234, Thr262, and Ser264 contribute to the pyridoxal 5'-phosphate site. Lys265 is subject to N6-(pyridoxal phosphate)lysine.

It belongs to the class-II pyridoxal-phosphate-dependent aminotransferase family. As to quaternary structure, homodimer. Requires pyridoxal 5'-phosphate as cofactor.

The protein localises to the cytoplasm. It catalyses the reaction L-serine + hexadecanoyl-CoA + H(+) = 3-oxosphinganine + CO2 + CoA. It participates in lipid metabolism; sphingolipid metabolism. With respect to regulation, not inhibited by relatively high concentrations of palmitoyl-CoA. Inhibited by both D-cycloserine (DCS) and L-cycloserine (LCS), which inactivate SPT by transamination to form a free pyridoxamine 5'-phosphate (PMP) and beta-aminooxyacetaldehyde that remain bound at the active site. Inhibition is reversed by incubation with excess pyridoxal phosphate. Inhibited by the fungal natural product myriocin, which acts as a competitive inhibitor for both L-serine and palmitoyl-CoA substrates. Its function is as follows. Catalyzes the condensation of L-serine with palmitoyl-CoA (hexadecanoyl-CoA) to produce 3-oxosphinganine. Exhibits a broad substrate specificity concerning the chain length and the degree of unsaturation of acyl-CoA. This is Serine palmitoyltransferase from Sphingomonas paucimobilis (Pseudomonas paucimobilis).